The sequence spans 113 residues: MAAIPSSGSLVATHDYYRRRLGSTSSSSSCGSVDYSGEVIPHHPGLPKADPGHWWASFFFGKSTHPVMTTVSESPENSGSFRITNGLVPCGLTQESVQKQKVSDSKSNSSPSA.

It belongs to the PPDPF family.

Its function is as follows. Probable regulator of exocrine pancreas development. This is Pancreatic progenitor cell differentiation and proliferation factor A (ppdpf-a) from Xenopus laevis (African clawed frog).